Consider the following 1051-residue polypeptide: Probable valine--tRNA ligase, mitochondrial (1051 aa).

The transit peptide at 1 to 20 (MNKLLFLSKKSSTSNLYRFY) directs the protein to the mitochondrion. The short motif at 71 to 81 (PNVTGSLHIGH) is the 'HIGH' region element. A 'KMSKS' region motif is present at residues 606–610 (KMSKS). An ATP-binding site is contributed by lysine 609. Residues 972-1019 (KELQISIEFDKEINNQLNQKLINPNQSNDKKILKLENFIKQLQDEIDN) adopt a coiled-coil conformation.

Belongs to the class-I aminoacyl-tRNA synthetase family.

Its subcellular location is the mitochondrion. It catalyses the reaction tRNA(Val) + L-valine + ATP = L-valyl-tRNA(Val) + AMP + diphosphate. The sequence is that of Probable valine--tRNA ligase, mitochondrial (valS2) from Dictyostelium discoideum (Social amoeba).